A 461-amino-acid polypeptide reads, in one-letter code: L-seryl-tRNA(Sec) selenium transferase (461 aa).

The residue at position 291 (Lys-291) is an N6-(pyridoxal phosphate)lysine.

This sequence belongs to the SelA family. It depends on pyridoxal 5'-phosphate as a cofactor.

It localises to the cytoplasm. The enzyme catalyses L-seryl-tRNA(Sec) + selenophosphate + H(+) = L-selenocysteinyl-tRNA(Sec) + phosphate. The protein operates within aminoacyl-tRNA biosynthesis; selenocysteinyl-tRNA(Sec) biosynthesis; selenocysteinyl-tRNA(Sec) from L-seryl-tRNA(Sec) (bacterial route): step 1/1. Converts seryl-tRNA(Sec) to selenocysteinyl-tRNA(Sec) required for selenoprotein biosynthesis. This Caldanaerobacter subterraneus subsp. tengcongensis (strain DSM 15242 / JCM 11007 / NBRC 100824 / MB4) (Thermoanaerobacter tengcongensis) protein is L-seryl-tRNA(Sec) selenium transferase.